A 323-amino-acid polypeptide reads, in one-letter code: Acetyl-coenzyme A carboxylase carboxyl transferase subunit alpha (323 aa).

The region spanning 39–293 is the CoA carboxyltransferase C-terminal domain; sequence RLSKKSQQLT…RRALADSLRQ (255 aa).

It belongs to the AccA family. Acetyl-CoA carboxylase is a heterohexamer composed of biotin carboxyl carrier protein (AccB), biotin carboxylase (AccC) and two subunits each of ACCase subunit alpha (AccA) and ACCase subunit beta (AccD).

Its subcellular location is the cytoplasm. It carries out the reaction N(6)-carboxybiotinyl-L-lysyl-[protein] + acetyl-CoA = N(6)-biotinyl-L-lysyl-[protein] + malonyl-CoA. It participates in lipid metabolism; malonyl-CoA biosynthesis; malonyl-CoA from acetyl-CoA: step 1/1. Its function is as follows. Component of the acetyl coenzyme A carboxylase (ACC) complex. First, biotin carboxylase catalyzes the carboxylation of biotin on its carrier protein (BCCP) and then the CO(2) group is transferred by the carboxyltransferase to acetyl-CoA to form malonyl-CoA. The protein is Acetyl-coenzyme A carboxylase carboxyl transferase subunit alpha of Burkholderia multivorans (strain ATCC 17616 / 249).